We begin with the raw amino-acid sequence, 1343 residues long: DNA-directed RNA polymerase subunit beta (1343 aa).

Belongs to the RNA polymerase beta chain family. In terms of assembly, the RNAP catalytic core consists of 2 alpha, 1 beta, 1 beta' and 1 omega subunit. When a sigma factor is associated with the core the holoenzyme is formed, which can initiate transcription.

It catalyses the reaction RNA(n) + a ribonucleoside 5'-triphosphate = RNA(n+1) + diphosphate. DNA-dependent RNA polymerase catalyzes the transcription of DNA into RNA using the four ribonucleoside triphosphates as substrates. In Shewanella denitrificans (strain OS217 / ATCC BAA-1090 / DSM 15013), this protein is DNA-directed RNA polymerase subunit beta.